Here is a 122-residue protein sequence, read N- to C-terminus: Large ribosomal subunit protein uL14 (122 aa).

It belongs to the universal ribosomal protein uL14 family. Part of the 50S ribosomal subunit. Forms a cluster with proteins L3 and L19. In the 70S ribosome, L14 and L19 interact and together make contacts with the 16S rRNA in bridges B5 and B8.

Its function is as follows. Binds to 23S rRNA. Forms part of two intersubunit bridges in the 70S ribosome. In Streptococcus pneumoniae (strain JJA), this protein is Large ribosomal subunit protein uL14.